The following is a 130-amino-acid chain: Protein ApaG (130 aa).

In terms of domain architecture, ApaG spans Lys3–Arg127.

This Methylorubrum populi (strain ATCC BAA-705 / NCIMB 13946 / BJ001) (Methylobacterium populi) protein is Protein ApaG.